The primary structure comprises 424 residues: Geranylgeranyl pyrophosphate synthase D (424 aa).

The segment at P42–N73 is disordered. Over residues S58 to A67 the composition is skewed to polar residues. K147, R150, and H179 together coordinate isopentenyl diphosphate. Residues D186 and D190 each coordinate Mg(2+). R195 provides a ligand contact to dimethylallyl diphosphate. R196 lines the isopentenyl diphosphate pocket. Dimethylallyl diphosphate contacts are provided by K274, T275, Q311, K328, and K338.

This sequence belongs to the FPP/GGPP synthase family. Mg(2+) serves as cofactor.

Its subcellular location is the cytoplasm. It carries out the reaction isopentenyl diphosphate + dimethylallyl diphosphate = (2E)-geranyl diphosphate + diphosphate. The enzyme catalyses isopentenyl diphosphate + (2E)-geranyl diphosphate = (2E,6E)-farnesyl diphosphate + diphosphate. The catalysed reaction is isopentenyl diphosphate + (2E,6E)-farnesyl diphosphate = (2E,6E,10E)-geranylgeranyl diphosphate + diphosphate. Its pathway is isoprenoid biosynthesis; farnesyl diphosphate biosynthesis; farnesyl diphosphate from geranyl diphosphate and isopentenyl diphosphate: step 1/1. The protein operates within isoprenoid biosynthesis; geranyl diphosphate biosynthesis; geranyl diphosphate from dimethylallyl diphosphate and isopentenyl diphosphate: step 1/1. It participates in isoprenoid biosynthesis; geranylgeranyl diphosphate biosynthesis; geranylgeranyl diphosphate from farnesyl diphosphate and isopentenyl diphosphate: step 1/1. Functionally, catalyzes the trans-addition of the 3 molecules of isopentenyl diphosphate (IPP) onto dimethylallyl diphosphate (DMAPP) to form geranylgeranyl pyrophosphate (GGDP). In Phomopsis amygdali (Fusicoccum amygdali), this protein is Geranylgeranyl pyrophosphate synthase D (GGS-D).